The sequence spans 656 residues: Probable Xaa-Pro aminopeptidase P (656 aa).

Aspartate 453, aspartate 464, glutamate 562, and glutamate 576 together coordinate Mn(2+).

Belongs to the peptidase M24B family. It depends on Mn(2+) as a cofactor.

The catalysed reaction is Release of any N-terminal amino acid, including proline, that is linked to proline, even from a dipeptide or tripeptide.. In terms of biological role, catalyzes the removal of a penultimate prolyl residue from the N-termini of peptides. The polypeptide is Probable Xaa-Pro aminopeptidase P (ampp) (Pyrenophora teres f. teres (strain 0-1) (Barley net blotch fungus)).